A 465-amino-acid chain; its full sequence is MAMTGSTPCSSMSSHTKERVTMTKVTLENFYSNLIAQHEEREMRQKKLEKVMEEEGLKDEEKRLRRSAHARKETEFLRLKRTRLGLEDFESLKVIGRGAFGEVRLVQKKDTGHVYAMKILRKADMLEKEQVGHIRAERDILVEADSLWVVKMFYSFQDKLNLYLIMEFLPGGDMMTLLMKKDTLTEEETQFYIAETVLAIDSIHQLGFIHRDIKPDNLLLDSKGHVKLSDFGLCTGLKKAHRTEFYRNLNHSLPSDFTFQNMNSKRKAETWKRNRRQLAFSTVGTPDYIAPEVFMQTGYNKLCDWWSLGVIMYEMLIGYPPFCSETPQETYKKVMNWKETLTFPPEVPISEKAKDLILRFCCEWEHRIGAPGVEEIKNNSFFEGVDWEHIRERPAAISIEIKSIDDTSNFDEFPESDILKPTVATSNHPDTDYKNKDWVFINYTYKRFEGLTARGAIPSYMKAAK.

Position 2 is an N-acetylalanine (Ala-2). Residues 62–87 (KRLRRSAHARKETEFLRLKRTRLGLE) are interaction with S100B. The residue at position 74 (Thr-74) is a Phosphothreonine. The 294-residue stretch at 89–382 (FESLKVIGRG…VEEIKNNSFF (294 aa)) folds into the Protein kinase domain. ATP-binding positions include 95 to 103 (IGRGAFGEV) and Lys-118. The active-site Proton acceptor is the Asp-212. At Ser-264 the chain carries Phosphoserine. Ser-281 carries the post-translational modification Phosphoserine; by autocatalysis. The UFM1-interacting motif (UFIM) motif lies at 306–311 (WSLGVI). Residues 383–455 (EGVDWEHIRE…KRFEGLTARG (73 aa)) enclose the AGC-kinase C-terminal domain. Thr-444 bears the Phosphothreonine; by STK24/MST3 mark.

It belongs to the protein kinase superfamily. AGC Ser/Thr protein kinase family. Homodimeric S100B binds two molecules of STK38. Interacts with MOB1 and MOB2. Interacts with MAP3K1 and MAP3K2 (via the kinase domain). Forms a tripartite complex with MOBKL1B and STK3/MST2. Interacts with MICAL1; leading to inhibit the protein kinase activity by antagonizing activation by MST1/STK4. Mg(2+) serves as cofactor. ISGylated. Post-translationally, phosphorylated by STK3/MST2 and this is enhanced by MOBKL1B.

The protein resides in the nucleus. It localises to the cytoplasm. The protein localises to the chromosome. The enzyme catalyses L-seryl-[protein] + ATP = O-phospho-L-seryl-[protein] + ADP + H(+). The catalysed reaction is L-threonyl-[protein] + ATP = O-phospho-L-threonyl-[protein] + ADP + H(+). With respect to regulation, activated by binding of S100B which releases autoinhibitory N-lobe interactions, enabling ATP to bind and the autophosphorylation of Ser-281. Thr-444 then undergoes calcium-dependent phosphorylation by STK24/MST3. Interactions between phosphorylated Thr-444 and the N-lobe promote additional structural changes that complete the activation of the kinase. Autoinhibition is also released by the binding of MOB1/MOBKL1A and MOB2/HCCA2 to the N-terminal of STK38. Functionally, serine/threonine-protein kinase that acts as a negative regulator of MAP3K1/2 signaling. Converts MAP3K2 from its phosphorylated form to its non-phosphorylated form and inhibits autophosphorylation of MAP3K2. Acts as an ufmylation 'reader' in a kinase-independent manner: specifically recognizes and binds mono-ufmylated histone H4 in response to DNA damage, promoting the recruitment of SUV39H1 to the double-strand breaks, resulting in ATM activation. The protein is Serine/threonine-protein kinase 38 (STK38) of Bos taurus (Bovine).